Here is a 323-residue protein sequence, read N- to C-terminus: Calcium homeostasis modulator protein 2 (323 aa).

The Cytoplasmic portion of the chain corresponds to 1–21 (MAALIAENFRFLSLFFKSKDV). The segment at 14–39 (LFFKSKDVMIFNGLVALGTVGSQELF) is central pore. The helical transmembrane segment at 22–43 (MIFNGLVALGTVGSQELFTVVA) threads the bilayer. Residues 44–52 (FHCPCSPAR) are Extracellular-facing. 2 disulfide bridges follow: C46/C130 and C48/C162. A helical membrane pass occupies residues 53–76 (NYLYGLAAIGVPALALFLIGVILN). The Cytoplasmic portion of the chain corresponds to 77 to 101 (NHTWNLVAECQYRRTKNCSAAPNFL). A helical transmembrane segment spans residues 102–132 (LLSSIVGRAAVAPVTWSVISLLRGEAYVCAL). The Extracellular segment spans residues 133 to 179 (SEFVNPHSLMVGERSFPVAHATEILARFPCGEGPANLSVFREEVSRR). The hemichannel docking stretch occupies residues 145 to 152 (ERSFPVAH). The helical transmembrane segment at 180 to 206 (LKYESQLFGWLLIGVVAILVFLTKCLK) threads the bilayer. Over 207–323 (HYCSPLSYRQ…DHVEMSLLPS (117 aa)) the chain is Cytoplasmic. The segment at 214–251 (YRQEAYWAQYRANEDQLFQRTAEVHSRVLAANNVRRFF) is intersubunit interaction.

The protein belongs to the CALHM family. In terms of assembly, homo-undecamer. Two undecameric hemichannels can assemble in a head-to-head manner to form a gap junction.

It is found in the cell membrane. It catalyses the reaction ATP(in) = ATP(out). Pore-forming subunit of Ca(2+) homeostasis modulator channels. Mediates ATP release from astrocytes and ATP-induced Ca(2+) influx in microglia thus regulating neuronal ATP and Ca(2+) homeostasis, synaptic transmission and neuroinflammatory response. May form intercellular gap junctions. The gating mechanism remains unknown. The chain is Calcium homeostasis modulator protein 2 (CALHM2) from Bos taurus (Bovine).